The sequence spans 439 residues: GTPase Der (439 aa).

EngA-type G domains follow at residues 4 to 166 and 175 to 350; these read PIVA…PAQD and IRIA…EEAS. Residues 10 to 17, 57 to 61, 119 to 122, 181 to 188, 228 to 232, and 293 to 296 contribute to the GTP site; these read GRPNVGKS, DTGGL, NKVE, DTAGM, and NKWD. The region spanning 351 to 435 is the KH-like domain; it reads KRVATADLNN…PIRFFLRKRE (85 aa).

The protein belongs to the TRAFAC class TrmE-Era-EngA-EngB-Septin-like GTPase superfamily. EngA (Der) GTPase family. Associates with the 50S ribosomal subunit.

Functionally, GTPase that plays an essential role in the late steps of ribosome biogenesis. This chain is GTPase Der, found in Desulforamulus reducens (strain ATCC BAA-1160 / DSM 100696 / MI-1) (Desulfotomaculum reducens).